The following is a 331-amino-acid chain: Ferredoxin--NADP reductase (331 aa).

Residues Thr-14, Glu-33, Gln-41, Tyr-46, Val-86, Phe-120, Asp-284, and Ser-327 each contribute to the FAD site.

This sequence belongs to the ferredoxin--NADP reductase type 2 family. In terms of assembly, homodimer. It depends on FAD as a cofactor.

It catalyses the reaction 2 reduced [2Fe-2S]-[ferredoxin] + NADP(+) + H(+) = 2 oxidized [2Fe-2S]-[ferredoxin] + NADPH. In Picrophilus torridus (strain ATCC 700027 / DSM 9790 / JCM 10055 / NBRC 100828 / KAW 2/3), this protein is Ferredoxin--NADP reductase.